The primary structure comprises 448 residues: MREIVHLQTGQCGNQVGAAFWQTISSEHGLDESGLCNASSDQQLERMNVYFNEVGNSKYVPRAVLVDLEPGTMDAIRSGPHGALFRPDNFVFGQSSAGNNWAKGHYTEGAELVDQVIDVVRREAESCDYLQGFQITHSLGGGTGAGMGTLLISKIREEFPDRMMATFSVLPSPKVSDTVVEPYNATLSVHQLVEHADETFCIDNEALYDICTRTLKLSSPSYGDLNHLVSTVMSGITASFRFPGQLNSDLRKLAVNMVPFPRLHFFMVGFAPLTSRGAQSFRAMSVPELTQQMFDSRNMMTACNFQNGRFLTCSALFRGKISMKEVDDQMLSIHTKNSGYFVEWIPNNVQTALCSVPPKGLKMSATFVGNSTSVQELFQRVATQFTAMFRRKAFLHWYTGEGMDEMEFTEAESNMNDLMSEYQQYQEASISDGEEQPYAEEAAYEAEE.

The GTP site is built by Gln11, Glu69, Ser138, Gly142, Thr143, Gly144, Asn204, and Asn226. Residue Glu69 coordinates Mg(2+). Positions 429–448 are disordered; it reads SISDGEEQPYAEEAAYEAEE. Acidic residues predominate over residues 432-448; the sequence is DGEEQPYAEEAAYEAEE.

It belongs to the tubulin family. Dimer of alpha and beta chains. A typical microtubule is a hollow water-filled tube with an outer diameter of 25 nm and an inner diameter of 15 nM. Alpha-beta heterodimers associate head-to-tail to form protofilaments running lengthwise along the microtubule wall with the beta-tubulin subunit facing the microtubule plus end conferring a structural polarity. Microtubules usually have 13 protofilaments but different protofilament numbers can be found in some organisms and specialized cells. Mg(2+) is required as a cofactor.

The protein localises to the cytoplasm. It localises to the cytoskeleton. Tubulin is the major constituent of microtubules, a cylinder consisting of laterally associated linear protofilaments composed of alpha- and beta-tubulin heterodimers. Microtubules grow by the addition of GTP-tubulin dimers to the microtubule end, where a stabilizing cap forms. Below the cap, tubulin dimers are in GDP-bound state, owing to GTPase activity of alpha-tubulin. In Aspergillus fumigatus (strain ATCC MYA-4609 / CBS 101355 / FGSC A1100 / Af293) (Neosartorya fumigata), this protein is Tubulin beta chain.